Here is a 174-residue protein sequence, read N- to C-terminus: ATP-dependent protease subunit HslV (174 aa).

T2 is a catalytic residue. Na(+)-binding residues include G157, D160, and T163.

This sequence belongs to the peptidase T1B family. HslV subfamily. A double ring-shaped homohexamer of HslV is capped on each side by a ring-shaped HslU homohexamer. The assembly of the HslU/HslV complex is dependent on binding of ATP.

The protein localises to the cytoplasm. The catalysed reaction is ATP-dependent cleavage of peptide bonds with broad specificity.. With respect to regulation, allosterically activated by HslU binding. Protease subunit of a proteasome-like degradation complex believed to be a general protein degrading machinery. The polypeptide is ATP-dependent protease subunit HslV (Aliivibrio fischeri (strain MJ11) (Vibrio fischeri)).